Reading from the N-terminus, the 63-residue chain is Large ribosomal subunit protein uL30 (63 aa).

This sequence belongs to the universal ribosomal protein uL30 family. As to quaternary structure, part of the 50S ribosomal subunit.

This Geobacillus stearothermophilus (Bacillus stearothermophilus) protein is Large ribosomal subunit protein uL30.